Here is a 116-residue protein sequence, read N- to C-terminus: Helper of Tim protein 13 (116 aa).

A CHY-type; degenerate zinc finger spans residues 10–94 (TVDDQSRCVH…SNLICPNCRS (85 aa)). Cysteine 17, histidine 19, cysteine 40, cysteine 43, cysteine 68, cysteine 71, cysteine 89, and cysteine 92 together coordinate Zn(2+).

In terms of assembly, interacts with the small Tim proteins TIM8, TIM9, TIM10, TIM12, and TIM13.

Its subcellular location is the mitochondrion intermembrane space. The protein resides in the mitochondrion membrane. In terms of biological role, required for the assembly or recycling of the small Tim proteins in the mitochondrial intermembrane, thereby participating in the import and insertion of multi-pass transmembrane proteins into the mitochondrial inner membrane. Probably acts by facilitating the formation of disulfide bonds in small Tim proteins. The protein is Helper of Tim protein 13 (HOT13) of Saccharomyces cerevisiae (strain ATCC 204508 / S288c) (Baker's yeast).